We begin with the raw amino-acid sequence, 479 residues long: MSEGEIVQVIGPVIDVKFPIDKNLPNINNALRVIKSENESIVLEVTVELGDGVLRTIAMESTDGLRRGMKVEDTGGPISVPVGEDTLGRVFNVLGQPIDGGPAFSKDHPRESIHKEAPKYEDLTTSREILETGIKVIDLLEPYVRGGKVGLFGGAGVGKTTIIQELIHNIAQEHGGISVFTGVGERTREGNDLYFEMKASGVLSKTAMVFGQMNEPPGARMRVALTGLTLAEYFRDVEGQDVLLFIDNIFRFTQAGSEVSALLGRMPSAVGYQPTLATEMGQLQERITSTKKGSITSIQAVYVPADDYTDPAPSTTFAHLDATTNLERSLVEQGIYPAVDPLESSSSALDPEVVGKEHYEVATRVQHVLQRYHELQDIISVLGMDELSDEEKLIVARARKVQFFLSQNFFVAEQFTGVPGSYVPIKETIKGFKLILDGHLDDLPEDSFRGVGPIEDVLKKAQEMGVTPSDPEAKALLEK.

153 to 160 (GGAGVGKT) is an ATP binding site.

This sequence belongs to the ATPase alpha/beta chains family. In terms of assembly, F-type ATPases have 2 components, CF(1) - the catalytic core - and CF(0) - the membrane proton channel. CF(1) has five subunits: alpha(3), beta(3), gamma(1), delta(1), epsilon(1). CF(0) has three main subunits: a(1), b(2) and c(9-12). The alpha and beta chains form an alternating ring which encloses part of the gamma chain. CF(1) is attached to CF(0) by a central stalk formed by the gamma and epsilon chains, while a peripheral stalk is formed by the delta and b chains.

It is found in the cell membrane. It carries out the reaction ATP + H2O + 4 H(+)(in) = ADP + phosphate + 5 H(+)(out). Functionally, produces ATP from ADP in the presence of a proton gradient across the membrane. The catalytic sites are hosted primarily by the beta subunits. This chain is ATP synthase subunit beta, found in Lactobacillus helveticus (strain DPC 4571).